A 440-amino-acid chain; its full sequence is Tetratricopeptide repeat protein 5 (440 aa).

TPR repeat units lie at residues 7 to 61 (EEVK…EEVV), 68 to 98 (AQVL…AVKL), 103 to 130 (VEAW…SGAL), 136 to 174 (KVSL…AVQM), and 179 to 216 (GRSW…AEKV). A Nuclear export signal motif is present at residues 13-24 (LQKLQELVDQLY). The residue at position 203 (Ser203) is a Phosphoserine; by ATM. A Phosphoserine; by CHEK2 modification is found at Ser221. One copy of the TPR 6 repeat lies at 224-253 (PDLHLNRATLHKYEESYGEALEGFSRAAAL). The mediates interaction with 28S rRNA of ribosome-coding tubulin stretch occupies residues 285-287 (KTK).

In terms of assembly, interacts with JMY and p300/EP300; the interaction occurs in the nucleus and augments the association between JMY and p300/EP300 in response to DNA damage. Forms a complex with HSF1 and p300/EP300; these interactions augment chromatin-bound HSF1 and p300/EP300 histone acetyltransferase activity, resulting in enhanced heat-shock-responsive transcription. Interacts with PRMT5; the interaction is DNA damage-dependent and promotes PRMT5 interaction with p53/TP53 and subsequent methylation. Interacts with JMY; the interaction occurs in the cytoplasm and results in the inhibition of JYM's nucleation activity. Interacts with ribosome-coding tubulin (via 60S subunit 28S rRNA and protein uL24/RPL26) and the N-terminal of nascent tubulin polypeptide (via alpha-tubulin MREC motif and beta-tubulin MREI motif); these interactions result in tubulin mRNA-targeted degradation. Interacts with ATP5F1B; the interaction occurs in the mitochondria and results in ATP production decrease. Interacts with p53/TP53; the interaction occurs in the mitochondria and results in increased apoptosis. In terms of processing, phosphorylation by ATM kinase induces nuclear accumulation while interfering with nuclear export, and phosphorylation by CHEK2 kinase enhances nuclear stability.

It is found in the nucleus. It localises to the cytoplasm. The protein resides in the cytoplasmic vesicle. Its subcellular location is the mitochondrion matrix. Cofactor involved in the regulation of various cellular mechanisms such as actin regulation, autophagy, chromatin regulation and DNA repair. In non-stress conditions, interacts with cofactor JMY in the cytoplasm which prevents JMY's actin nucleation activity and ability to activate the Arp2/3 complex. Acts as a negative regulator of nutrient stress-induced autophagy by preventing JMY's interaction with MAP1LC3B, thereby preventing autophagosome formation. Involves in tubulin autoregulation by promoting its degradation in response to excess soluble tubulin. To do so, associates with the active ribosome near the ribosome exit tunnel and with nascent tubulin polypeptides early during their translation, triggering tubulin mRNA-targeted degradation. Following DNA damage, phosphorylated by DNA damage responsive protein kinases ATM and CHEK2, leading to its nuclear accumulation and stability. Nuclear TTC5/STRAP promotes the assembly of a stress-responsive p53/TP53 coactivator complex, which includes the coactivators JMY and p300, thereby increasing p53/TP53-dependent transcription and apoptosis. Also recruits arginine methyltransferase PRMT5 to p53/TP53 when DNA is damaged, allowing PRMT5 to methylate p53/TP53. In DNA stress conditions, also prevents p53/TP53 degradation by E3 ubiquitin ligase MDM2. Upon heat-shock stress, forms a chromatin-associated complex with heat-shock factor 1 HSF1 and p300/EP300 to stimulate heat-shock-responsive transcription, thereby increasing cell survival. Mitochondrial TTC5/STRAP interacts with ATP synthase subunit beta ATP5F1B which decreased ATP synthase activity and lowers mitochondrial ATP production, thereby regulating cellular respiration and mitochondrial-dependent apoptosis. Mitochondrial TTC5/STRAP also regulates p53/TP53-mediated apoptosis. The sequence is that of Tetratricopeptide repeat protein 5 from Homo sapiens (Human).